The following is a 188-amino-acid chain: Pterocarpan synthase 1 (188 aa).

Positions 1 to 23 are cleaved as a signal peptide; it reads MAKSTTFFISLTLPFLLLSVVTA. Asn-127 is a glycosylation site (N-linked (GlcNAc...) asparagine).

The protein belongs to the plant dirigent protein family. Homodimer.

The protein resides in the secreted. Its subcellular location is the extracellular space. The protein localises to the apoplast. It catalyses the reaction a (4R)-4,2'-dihydroxyisoflavan = a pterocarpan + H2O.. The enzyme catalyses (3R,4R)-7,2'-dihydroxy-4'-methoxyisoflavanol = (-)-medicarpin + H2O. The catalysed reaction is (3S,4R)-7,2'-dihydroxy-4'-methoxyisoflavanol = (+)-medicarpin + H2O. It carries out the reaction (3R,4R)-3-(6-hydroxy-1,3-benzodioxol-5-yl)-3,4-dihydro-2H-chromene-4,7-diol = (-)-maackiain + H2O. It catalyses the reaction (3R,4R)-7,2',4'-trihydroxyisoflavanol = (6aR,11aR)-3,9-dihydroxypterocarpan + H2O. Involved in pterocarpan phytoalexin biosynthesis. Catalyzes the last step in the biosynthesis of the phytoalexin medicarpin, and thereby contributes to plant defense reactions. Dirigent proteins impart stereoselectivity on the phenoxy radical-coupling reaction, yielding optically active lignans from two molecules of coniferyl alcohol in the biosynthesis of lignans, flavonolignans, and alkaloids and thus plays a central role in plant secondary metabolism. This Glycyrrhiza echinata (Licorice) protein is Pterocarpan synthase 1.